The following is a 329-amino-acid chain: MTHFNKGPSYGLSAEVKNKIASKYDHQAEEDLRNWIEEVTGMSIGANFQLGLKDGIILCELINKLQPGSVKKVNESSLNWPQLENIGNFIKAIQAYGMKPHDIFEANDLFENGNMTQVQTTLVALAGLAKTKGFHTTIDIGVKYAEKQTRRFDEGKLKAGQSVIGLQMGTNKCASQAGMTAYGTRRHLYDPKMQTDKPFDQTTISLQMGTNKGASQAGMLAPGTRRDIYDQKLTLQPVDNSTISLQMGTNKVASQKGMSVYGLGRQVYDPKYCAAPTEPVIHNGSQGTGTNGSEISDSDYQAEYPDEYHGEYQDDYPRDYQYGDQGIDY.

The residue at position 23 (Lys23) is an N6-acetyllysine. One can recognise a Calponin-homology (CH) domain in the interval 26-130 (HQAEEDLRNW…TLVALAGLAK (105 aa)). The residue at position 158 (Lys158) is an N6-methyllysine. 3 Calponin-like repeats span residues 164 to 189 (IGLQ…RHLY), 204 to 229 (ISLQ…RDIY), and 243 to 268 (ISLQ…RQVY). The interval 280–329 (VIHNGSQGTGTNGSEISDSDYQAEYPDEYHGEYQDDYPRDYQYGDQGIDY) is disordered. Residues 306-318 (DEYHGEYQDDYPR) are compositionally biased toward basic and acidic residues.

Belongs to the calponin family.

Its function is as follows. Thin filament-associated protein that is implicated in the regulation and modulation of smooth muscle contraction. It is capable of binding to actin, calmodulin and tropomyosin. The interaction of calponin with actin inhibits the actomyosin Mg-ATPase activity. The chain is Calponin-3 (CNN3) from Bos taurus (Bovine).